Here is a 136-residue protein sequence, read N- to C-terminus: Large ribosomal subunit protein bL21 (136 aa).

Belongs to the bacterial ribosomal protein bL21 family. Part of the 50S ribosomal subunit. Contacts protein L20.

Functionally, this protein binds to 23S rRNA in the presence of protein L20. The chain is Large ribosomal subunit protein bL21 from Gloeothece citriformis (strain PCC 7424) (Cyanothece sp. (strain PCC 7424)).